Reading from the N-terminus, the 82-residue chain is Translation initiation factor IF-1, chloroplastic (82 aa).

In terms of domain architecture, S1-like spans 1-72; the sequence is MNKQNLIDVE…TKGRIIYRLR (72 aa).

Belongs to the IF-1 family. Component of the 30S ribosomal translation pre-initiation complex which assembles on the 30S ribosome in the order IF-2 and IF-3, IF-1 and N-formylmethionyl-tRNA(fMet); mRNA recruitment can occur at any time during PIC assembly.

The protein resides in the plastid. It is found in the chloroplast. Its function is as follows. One of the essential components for the initiation of protein synthesis. Stabilizes the binding of IF-2 and IF-3 on the 30S subunit to which N-formylmethionyl-tRNA(fMet) subsequently binds. Helps modulate mRNA selection, yielding the 30S pre-initiation complex (PIC). Upon addition of the 50S ribosomal subunit IF-1, IF-2 and IF-3 are released leaving the mature 70S translation initiation complex. The sequence is that of Translation initiation factor IF-1, chloroplastic from Cycas taitungensis (Prince sago).